Reading from the N-terminus, the 161-residue chain is Small ribosomal subunit protein uS19 (161 aa).

Basic residues predominate over residues 1–19 (MARQKKYSGKGGARKKNKQ). Positions 1 to 26 (MARQKKYSGKGGARKKNKQKQNVAPR) are disordered.

It belongs to the universal ribosomal protein uS19 family.

In terms of biological role, protein S19 forms a complex with S13 that binds strongly to the 16S ribosomal RNA. The protein is Small ribosomal subunit protein uS19 of Methanococcus maripaludis (strain DSM 14266 / JCM 13030 / NBRC 101832 / S2 / LL).